The chain runs to 362 residues: 3-ketodihydrosphingosine reductase gsl-3 (362 aa).

Leucine 55 serves as a coordination point for NADP(+). The NADPH site is built by glycine 58, serine 60, glycine 62, and arginine 83. The short motif at 58–62 (GASEG) is the GXSXG element. An NADP(+)-binding site is contributed by asparagine 84. NADPH is bound by residues arginine 87 and aspartate 113. Aspartate 113, arginine 176, tyrosine 216, lysine 220, isoleucine 252, and serine 254 together coordinate NADP(+). Tyrosine 216 acts as the Proton acceptor in catalysis. The active-site Lowers pKa of active site Tyr is lysine 220. A helical membrane pass occupies residues 318 to 338 (NNWVLDTLMGWLIPIIYFFVL).

It belongs to the short-chain dehydrogenases/reductases (SDR) family.

The protein localises to the endoplasmic reticulum membrane. It carries out the reaction sphinganine + NADP(+) = 3-oxosphinganine + NADPH + H(+). It functions in the pathway lipid metabolism; sphingolipid metabolism. In terms of biological role, catalyzes the reduction of 3'-oxosphinganine (3-ketodihydrosphingosine/KDS) to sphinganine (dihydrosphingosine/DHS), the second step of de novo sphingolipid biosynthesis. This Neurospora crassa (strain ATCC 24698 / 74-OR23-1A / CBS 708.71 / DSM 1257 / FGSC 987) protein is 3-ketodihydrosphingosine reductase gsl-3 (gsl-3).